Reading from the N-terminus, the 453-residue chain is GTPase Der (453 aa).

2 consecutive EngA-type G domains span residues 4 to 169 (PIVA…PPTT) and 177 to 352 (IKIA…EEHK). GTP-binding positions include 10–17 (GRPNVGKS), 57–61 (DTGGL), 120–123 (NKCE), 183–190 (GRPNVGKS), 230–234 (DTAGI), and 295–298 (NKWD). The KH-like domain maps to 353–438 (RRVSTSVINE…PIRLLWRSKK (86 aa)).

It belongs to the TRAFAC class TrmE-Era-EngA-EngB-Septin-like GTPase superfamily. EngA (Der) GTPase family. As to quaternary structure, associates with the 50S ribosomal subunit.

In terms of biological role, GTPase that plays an essential role in the late steps of ribosome biogenesis. This is GTPase Der from Trichormus variabilis (strain ATCC 29413 / PCC 7937) (Anabaena variabilis).